Here is a 215-residue protein sequence, read N- to C-terminus: MLEELLNGNIEKKTITQIYGPPGVGKTNICILSMLNAIENGKSVVYIDTEGSLSIERIKQLSGKNCEELLKNIIIYEPSTFEEQSEALEKIFLLENIGLIIIDGIVSLYRLELCDNINENTKLNRMLGKQISNLLKVARKKNSGILITNQVKDSANGIEPAGGRLLEYWSKSIIKLEKAESVRKLTLEKHRHAKEGENLRFRILQNGLEIINKSY.

It belongs to the eukaryotic RecA-like protein family. RadB subfamily.

Its function is as follows. Involved in DNA repair and in homologous recombination. May regulate the cleavage reactions of the branch-structured DNA. Has a very weak ATPase activity that is not stimulated by DNA. Binds DNA but does not promote DNA strands exchange. This chain is DNA repair and recombination protein RadB, found in Methanococcus maripaludis (strain C7 / ATCC BAA-1331).